Reading from the N-terminus, the 351-residue chain is Nuclear inhibitor of protein phosphatase 1 (351 aa).

An interaction with CDC5L, SF3B1 and MELK region spans residues 1–142 (MAAAVNSGSS…LPSAVKGDEK (142 aa)). The region spanning 49–101 (YLFGRNPDLCDFTIDHQSCSRVHAALVYHKHLKRVFLIDLNSTHGTFLGHIRL) is the FHA domain. The interval 143 to 224 (MGGEDDELKG…VDPSVGRFRN (82 aa)) is interaction with EED. Threonine 161 carries the phosphothreonine modification. A phosphoserine mark is found at serine 178 and serine 199. 2 short sequence motifs (nuclear localization signal) span residues 185–209 (GNLD…DDEI) and 210–240 (INPE…RMEG). Residues 191 to 200 (RPKRKRKNSR) are involved in PP-1 inhibition. Residues 200-203 (RVTF) are involved in PP-1 binding. Serine 204 carries the post-translational modification Phosphoserine. Serine 249 carries the phosphoserine modification. Tyrosine 264 carries the post-translational modification Phosphotyrosine. The tract at residues 310–329 (AVAINPTPNPAVYNPEAVNE) is interaction with EED. The interval 314 to 351 (NPTPNPAVYNPEAVNEPKKKKYAKEAWPGKKPTPSLLI) is disordered. The tract at residues 330–351 (PKKKKYAKEAWPGKKPTPSLLI) is RNA-binding. Residues 331-337 (KKKKYAK) are involved in PP-1 inhibition. Tyrosine 335 is subject to Phosphotyrosine.

In terms of assembly, interacts with phosphorylated CDC5L, SF3B1 and MELK. Part of the spliceosome. Interacts with PPP1CA, PPP1CB and PPP1CC. Interacts with EED. Part of a complex consisting of PPP1R8, EED, HDAC2 and PP-1. May be inactivated by phosphorylation on Ser-199 or Ser-204.

It localises to the nucleus. The protein resides in the nucleus speckle. Its function is as follows. Inhibitor subunit of the major nuclear protein phosphatase-1 (PP-1). It has RNA-binding activity but does not cleave RNA and may target PP-1 to RNA-associated substrates. May also be involved in pre-mRNA splicing. Binds DNA and might act as a transcriptional repressor. Essential for cell proliferation and early embryonic development. The polypeptide is Nuclear inhibitor of protein phosphatase 1 (Ppp1r8) (Mus musculus (Mouse)).